The primary structure comprises 66 residues: Omega conotoxin-CVIE (66 aa).

The N-terminal stretch at 1 to 17 (VVIVAVLLLTACQLITA) is a signal peptide. Positions 18 to 40 (NDSRGTQKHRALRSDTKLSMSTR) are excised as a propeptide. 3 disulfides stabilise this stretch: C41–C56, C48–C60, and C55–C65. Position 65 is a cysteine amide (C65).

This sequence belongs to the conotoxin O1 superfamily. Expressed by the venom duct.

It localises to the secreted. Functionally, omega-conotoxins act at presynaptic membranes, they bind and block voltage-gated calcium channels. This toxin blocks N-type calcium channels (Cav2.2/CACNA1B). It shows a higher potency when Cav2.2/CACNA1B is only expressed with the ancillary subunit CACNB3 (IC(50)=0.12 nM) than on Cav2.2/CACNA1B expressed with the ancillary subunits CACNA2D1 and CACNB3 (IC(50)=2.6 nM). The Cav2.2/CACNA1B block by this toxin is voltage-independent, whereas the recovery from toxin block is voltage-dependent. There is a low recovery at physiological membrane potential and a high recovery with hyperpolarized potential. This indicates that the toxin has a higher affinity for Cav2.2/CACNA1B in the inactivated state. It is noteworthy that ancillary subunits beta modulate recovery from this toxin block. Cav2.2/CACNA1B expressed with the ancillary subunit CACNB2a (isoform 2a) almost recover completely from this toxin block, whereas Cav2.2/CACNA1B expressed with CACNB3 exhibits relatively weak recovery. Inhibition by this toxin of excitatory synaptic transmission is reversible. In vivo, when tested on rat model of persistent pain, this toxin blocks chronic pain behavior. This is Omega conotoxin-CVIE from Conus catus (Cat cone).